The chain runs to 467 residues: Protein arginine methyltransferase NDUFAF7 homolog, mitochondrial (467 aa).

Belongs to the NDUFAF7 family.

It is found in the mitochondrion. It carries out the reaction L-arginyl-[protein] + 2 S-adenosyl-L-methionine = N(omega),N(omega)'-dimethyl-L-arginyl-[protein] + 2 S-adenosyl-L-homocysteine + 2 H(+). In terms of biological role, arginine methyltransferase involved in the assembly or stability of mitochondrial NADH:ubiquinone oxidoreductase complex (complex I). The sequence is that of Protein arginine methyltransferase NDUFAF7 homolog, mitochondrial from Schizosaccharomyces pombe (strain 972 / ATCC 24843) (Fission yeast).